A 108-amino-acid polypeptide reads, in one-letter code: uncharacterized protein (108 aa).

Composition is skewed to basic and acidic residues over residues 1–15 (MSEAKDNGSRDEVLV) and 53–69 (KLKDRESHQENEDRNSE). A disordered region spans residues 1–77 (MSEAKDNGSR…SELDQDEEDK (77 aa)).

This is an uncharacterized protein from Homo sapiens (Human).